The primary structure comprises 232 residues: Orotidine 5'-phosphate decarboxylase (232 aa).

Residues D11, K33, 60 to 69 (DLKLYDIPNT), T119, R180, Q189, G209, and R210 contribute to the substrate site. K62 serves as the catalytic Proton donor.

It belongs to the OMP decarboxylase family. Type 1 subfamily. Homodimer.

It catalyses the reaction orotidine 5'-phosphate + H(+) = UMP + CO2. Its pathway is pyrimidine metabolism; UMP biosynthesis via de novo pathway; UMP from orotate: step 2/2. Its function is as follows. Catalyzes the decarboxylation of orotidine 5'-monophosphate (OMP) to uridine 5'-monophosphate (UMP). The polypeptide is Orotidine 5'-phosphate decarboxylase (Wigglesworthia glossinidia brevipalpis).